The following is a 359-amino-acid chain: MFDIDGLVSDSLKLLADRVDKNYRISLVIVGPPGSGKSTIANELCERLNSMFHEYLKEHGGNIEISGVSEPLPVDITEPIREVSRNIVEYMTSNDGILPQSVEDLDFECVKFQDDGRDNGNVNGNVKVIGRGGLPNAIEVSPYHDLSKPKEKCDVNIAQIIPMDGFHLTRKCLDNFKDPVNAHRRRGSPSTFDSNNFLQLCKLLAETSNTKIPLSRFQNSDNDDVDAVWEKLAKTFTSDVQDIYIPGFDHSLKDPTSNQYCINGFTRIMIFEGLYLLYDQENWSKIYQVLSGTDALLIWNIDIDEAVIQDRVAKRHLNSGLVNTFEEGIDKFQVNDLLNARSIRQHTLDVKDVVTIHND.

31–39 (GPPGSGKST) contacts ATP.

The protein belongs to the YFH7 family.

Functionally, ATP-dependent kinase that could be involved in endoplasmic reticulum membrane assembly. This Vanderwaltozyma polyspora (strain ATCC 22028 / DSM 70294 / BCRC 21397 / CBS 2163 / NBRC 10782 / NRRL Y-8283 / UCD 57-17) (Kluyveromyces polysporus) protein is ATP-dependent kinase YFH7 (YFH7).